The sequence spans 422 residues: Cysteate synthase (422 aa).

Position 105 is an N6-(pyridoxal phosphate)lysine (Lys105). Pyridoxal 5'-phosphate is bound by residues Asn131 and Thr379.

The protein belongs to the threonine synthase family. Cysteate synthase subfamily. In terms of assembly, homotrimer. Pyridoxal 5'-phosphate serves as cofactor.

The enzyme catalyses O-phospho-L-serine + sulfite + H(+) = L-cysteate + phosphate. Its pathway is cofactor biosynthesis; coenzyme M biosynthesis. Specifically catalyzes the beta-elimination of phosphate from L-phosphoserine and the beta-addition of sulfite to the dehydroalanine intermediate to produce L-cysteate. This Methanospirillum hungatei JF-1 (strain ATCC 27890 / DSM 864 / NBRC 100397 / JF-1) protein is Cysteate synthase.